The chain runs to 64 residues: uncharacterized protein (64 aa).

A compositionally biased stretch (polar residues) spans 1 to 14; sequence MFNFDPTDQPTDQH. The disordered stretch occupies residues 1–42; that stretch reads MFNFDPTDQPTDQHLLQLPTDPHPLQQPIDPHPPPQPNNNLP.

This is an uncharacterized protein from Dictyostelium discoideum (Social amoeba).